A 276-amino-acid chain; its full sequence is Type II pantothenate kinase (276 aa).

8 to 15 (DAGGTLTK) serves as a coordination point for ATP. Residue Glu76 is the Proton acceptor of the active site. ATP contacts are provided by residues Thr105, 127–131 (GGTIM), Phe143, and Ser230.

The protein belongs to the type II pantothenate kinase family. In terms of assembly, homodimer.

The protein localises to the cytoplasm. It carries out the reaction (R)-pantothenate + ATP = (R)-4'-phosphopantothenate + ADP + H(+). It functions in the pathway cofactor biosynthesis; coenzyme A biosynthesis; CoA from (R)-pantothenate: step 1/5. Its function is as follows. Catalyzes the phosphorylation of pantothenate (Pan), the first step in CoA biosynthesis. The chain is Type II pantothenate kinase from Bacillus cereus (strain ZK / E33L).